Here is a 334-residue protein sequence, read N- to C-terminus: Glutaminase (334 aa).

Substrate is bound by residues Ser-76, Asn-126, Glu-170, Asn-177, Tyr-201, Tyr-253, and Val-271.

The protein belongs to the glutaminase family. In terms of assembly, homotetramer.

The catalysed reaction is L-glutamine + H2O = L-glutamate + NH4(+). The polypeptide is Glutaminase (Trichormus variabilis (strain ATCC 29413 / PCC 7937) (Anabaena variabilis)).